Here is a 337-residue protein sequence, read N- to C-terminus: Cytoskeleton protein RodZ (337 aa).

Over 1–111 (MNTEATHDQN…LGKRRKKRDG (111 aa)) the chain is Cytoplasmic. The HTH cro/C1-type domain maps to 19–71 (LRNAREQLGLSQQAVAERLCLKVSTVRDIEEDKAPADLASTFLRGYIRSYARL). Positions 30–49 (QQAVAERLCLKVSTVRDIEE) form a DNA-binding region, H-T-H motif. A helical; Signal-anchor for type II membrane protein transmembrane segment spans residues 112–132 (WLMTFTWLVLFVVIGLSGAWW). Residues 133–337 (WQDRKAQQEE…TLNAEQSPAQ (205 aa)) lie on the Periplasmic side of the membrane. The segment covering 144–167 (TTMADQSSAELSSNSEQGQSVPLN) has biased composition (polar residues). Positions 144 to 235 (TTMADQSSAE…PTAATTPDGA (92 aa)) are disordered. Over residues 168–207 (TSTTTDPATTSTPPASVDTTATNTQTPAVTAPAPAVDPQQ) the composition is skewed to low complexity. Over residues 208–218 (NAVVSPSQANV) the composition is skewed to polar residues. Low complexity predominate over residues 219–235 (DTAATPAPTAATTPDGA).

This sequence belongs to the RodZ family.

The protein localises to the cell inner membrane. Its function is as follows. Cytoskeletal protein that is involved in cell-shape control through regulation of the length of the long axis. This chain is Cytoskeleton protein RodZ, found in Escherichia coli (strain K12 / MC4100 / BW2952).